A 352-amino-acid chain; its full sequence is Ribosome biogenesis protein BRX1 homolog (352 aa).

The segment at 1 to 47 (MAATKRKRRGDLEVQAKKPKKNRKDAGQPAKQADVAKEAEEEKDRIP) is disordered. Basic and acidic residues predominate over residues 34-46 (DVAKEAEEEKDRI). Residues 59-248 (ERILIFSSRG…LIKIFQGSFG (190 aa)) form the Brix domain. A Glycyl lysine isopeptide (Lys-Gly) (interchain with G-Cter in SUMO2) cross-link involves residue Lys159. Ser260 is modified (phosphoserine). At Lys275 the chain carries N6-acetyllysine. Residues 281 to 301 (QVKDVQKSRKKEPKTILPHDP) form a disordered region. Residues Lys313 and Lys321 each participate in a glycyl lysine isopeptide (Lys-Gly) (interchain with G-Cter in SUMO2) cross-link.

The protein belongs to the BRX1 family.

It is found in the nucleus. The protein resides in the nucleolus. In terms of biological role, required for biogenesis of the 60S ribosomal subunit. This Rattus norvegicus (Rat) protein is Ribosome biogenesis protein BRX1 homolog (Brix1).